The following is a 1712-amino-acid chain: Probable ATP-dependent RNA helicase DDX60 (1712 aa).

Residues 772–939 enclose the Helicase ATP-binding domain; that stretch reads LDVVDKNESA…WLQSVKWYWK (168 aa). 785–792 is a binding site for ATP; sequence APTSSGKT. Residues 889-892 carry the DEVH box motif; the sequence is DEVH. The region spanning 1226–1370 is the Helicase C-terminal domain; that stretch reads YADQKAVDTE…HFPLSITLVL (145 aa).

It belongs to the helicase family. In terms of assembly, interacts with EXOSC1, EXOSC4, RIGI, IFIH1/MDA5 and DHX58/LGP2. As to expression, brain, lymph node, prostate, stomach, thyroid, tongue, trachea, uterus, skeletal muscle, spleen, kidney, liver and small intestine.

It localises to the cytoplasm. The catalysed reaction is ATP + H2O = ADP + phosphate + H(+). Positively regulates RIGI- and IFIH1/MDA5-dependent type I interferon and interferon inducible gene expression in response to viral infection. Binds ssRNA, dsRNA and dsDNA and can promote the binding of RIGI to dsRNA. Exhibits antiviral activity against hepatitis C virus and vesicular stomatitis virus (VSV). This chain is Probable ATP-dependent RNA helicase DDX60 (DDX60), found in Homo sapiens (Human).